The following is a 501-amino-acid chain: GMP synthase [glutamine-hydrolyzing] (501 aa).

One can recognise a Glutamine amidotransferase type-1 domain in the interval methionine 1–asparagine 185. Residue cysteine 75 is the Nucleophile of the active site. Active-site residues include histidine 159 and glutamate 161. The region spanning tryptophan 186–arginine 376 is the GMPS ATP-PPase domain. ATP is bound at residue serine 213 to serine 219.

Homodimer.

The catalysed reaction is XMP + L-glutamine + ATP + H2O = GMP + L-glutamate + AMP + diphosphate + 2 H(+). It participates in purine metabolism; GMP biosynthesis; GMP from XMP (L-Gln route): step 1/1. Functionally, catalyzes the synthesis of GMP from XMP. The protein is GMP synthase [glutamine-hydrolyzing] of Thermotoga petrophila (strain ATCC BAA-488 / DSM 13995 / JCM 10881 / RKU-1).